The sequence spans 230 residues: Ureidoacrylate amidohydrolase RutB (230 aa).

The active-site Proton acceptor is D23. K132 is a catalytic residue. Residue C165 is the Nucleophile of the active site.

The protein belongs to the isochorismatase family. RutB subfamily.

It catalyses the reaction (Z)-3-ureidoacrylate + H2O + H(+) = (Z)-3-aminoacrylate + NH4(+) + CO2. It carries out the reaction (Z)-3-ureidoacrylate + H2O = (Z)-3-aminoacrylate + carbamate + H(+). The enzyme catalyses (Z)-2-methylureidoacrylate + H2O + H(+) = (Z)-2-methylaminoacrylate + NH4(+) + CO2. Its function is as follows. Hydrolyzes ureidoacrylate to form aminoacrylate and carbamate. The carbamate hydrolyzes spontaneously, thereby releasing one of the nitrogen atoms of the pyrimidine ring as ammonia and one of its carbon atoms as CO2. The chain is Ureidoacrylate amidohydrolase RutB from Yersinia enterocolitica serotype O:8 / biotype 1B (strain NCTC 13174 / 8081).